A 326-amino-acid chain; its full sequence is Putative HTH-type transcriptional regulatory protein MMP0678 (326 aa).

The HTH cro/C1-type domain maps to 128-183 (LRETREKLKISVGELAEVSRVSRKTIYKYEQNEANPSAEVAIKIEEYLDVPLIKGI). A DNA-binding region (H-T-H motif) is located at residues 139-158 (VGELAEVSRVSRKTIYKYEQ).

The protein is Putative HTH-type transcriptional regulatory protein MMP0678 of Methanococcus maripaludis (strain DSM 14266 / JCM 13030 / NBRC 101832 / S2 / LL).